Reading from the N-terminus, the 834-residue chain is MGSLDYSSKNNSSLGSISSDDESIVLDNENNGAPKAQPRTTLLQLKKSLEADYKKNLYKNADGQDHLLLQNTFRKILNYGTITLDAVKKELTTYIQDSENEPYSAVVRSLLVKVVESKTIPVDRLVDFMTAFNGQSLPIDIFYKKYFGPDALKPTVWDVFGSSLSDLSSSDSDSSSTTTTTSDTSIWSDSSSASAQRNRSPTRSTRSSRSSRSSIRSSSSTSSRSSRSSSSSSSSSNSSSDTTSSSSSSSSSSEDDDESKAPAMVQSPTNNKIREFTPQERQRIELVKERAENKKIVPREAKVVQVQPGGKPGGVDVNFATRQSSGGPSPVKRTFSDPVSSTSQKDCEFLYKKLPWVKDIINHVYVYPVRGNFEGIIEYDKFIEHDGRKWYHPKEQYYTLQCMGTKSQRGKTLTITRDGKTWKLMVAIDTGTRGIVVQNEDMLTAELDYIRTWKTSKNDHIRDFMENVPTADMVQLAKIVLVNALQDSLGATVPLVYKSTTSPFIETVVDTIFKNSKNGESFVRILSNLVVFLTINLSFISSSVFAKRLRRQIYLPETLPFLTDADKLPEVFVVKNIPENTKKFVVEKLEEERTSFTRQFYDNLRIDSSLIRKPTKPILWNKPTTQVELPDIKTVCKNRNDVQDEQDEDVVYYTDMNEIYCFNVYKLWSLFRQTDTPINPYTSRPFTDQFIQIFLTRYASKPLVRKIENLTKTTATSRLEELIERELSLIENNLIEAENPTFIQKYKTTITQTPSDDYLPVQGKRRISRVTPSPPGGATKVRENFHPPGSAAGNTCMECRTPIEPSSDGIMSVFRNKMVRFCSYDCLERNKAFK.

Disordered regions lie at residues 1 to 38, 166 to 280, and 767 to 787; these read MGSL…KAQP, DLSS…TPQE, and ISRV…NFHP. Low complexity-rich tracts occupy residues 7–18 and 166–252; these read SSKNNSSLGSIS and DLSS…SSSS.

This sequence belongs to the IIV-6 268L family.

This is an uncharacterized protein from Invertebrate iridescent virus 3 (IIV-3).